Consider the following 326-residue polypeptide: MSHAPGEGRPVSSLFPARCNEEVASQNATTMATLNEIELSEIEELSLNFKETPRQDHSMTPVELCYFDDFATTLVVDAVLNFSTHKMCKKRRYLYGDEQRVARELMERFRKDQDWTPAIYGFLNMRSVRSFIEKLAFNKQLEFRDHIIRFLNVFHHDSGYTIQECTRYSLEGNQGAKLVATRAWYRGDKIQRLSGVVCLLSTQDEDTILQPEGSDFSVMYSNRKRCSTLWLGPGAYINHDCRPTCEFVSHGSTAHIRVLRDMVAGDEITCFYGSEFFGPKNMDCECLTCEKTKRGKFSTSDEEENDEPSALSEKRIKYGLRSRSRV.

The SET domain occupies 163–273 (QECTRYSLEG…AGDEITCFYG (111 aa)). The interval 294-313 (RGKFSTSDEEENDEPSALSE) is disordered.

Belongs to the class V-like SAM-binding methyltransferase superfamily. Histone-lysine methyltransferase family. Suvar4-20 subfamily.

The protein resides in the nucleus. It localises to the chromosome. The enzyme catalyses N(6)-methyl-L-lysyl(20)-[histone H4] + S-adenosyl-L-methionine = N(6),N(6)-dimethyl-L-lysyl(20)-[histone H4] + S-adenosyl-L-homocysteine + H(+). It catalyses the reaction N(6),N(6)-dimethyl-L-lysyl(20)-[histone H4] + S-adenosyl-L-methionine = N(6),N(6),N(6)-trimethyl-L-lysyl(20)-[histone H4] + S-adenosyl-L-homocysteine + H(+). Functionally, histone methyltransferase that specifically di- and trimethylates 'Lys-20' of histone H4 (H4K20me2/me3). H4 'Lys-20' trimethylation represents a specific tag for epigenetic transcriptional repression. Contributes to dosage compensation of X chromosome-relative to autosome-linked gene expression, possibly by converting H4K20me1 to H4K20m2/me3 on autosomes. Involved in the regulation of growth and body fat metabolism downstream of the TOR complex 2 pathway. The chain is Histone-lysine N-methyltransferase Suv4-20 from Caenorhabditis briggsae.